The chain runs to 176 residues: Probable DNA-directed RNA polymerase subunit delta (176 aa).

The HTH HARE-type domain occupies Leu14–Trp81. Disordered stretches follow at residues Val91–Asp119 and Asp140–Lys176. Acidic residues-rich tracts occupy residues Asp105–Asp119 and Thr159–Lys176.

This sequence belongs to the RpoE family. In terms of assembly, RNAP is composed of a core of 2 alpha, a beta and a beta' subunits. The core is associated with a delta subunit and one of several sigma factors.

In terms of biological role, participates in both the initiation and recycling phases of transcription. In the presence of the delta subunit, RNAP displays an increased specificity of transcription, a decreased affinity for nucleic acids, and an increased efficiency of RNA synthesis because of enhanced recycling. This chain is Probable DNA-directed RNA polymerase subunit delta, found in Listeria welshimeri serovar 6b (strain ATCC 35897 / DSM 20650 / CCUG 15529 / CIP 8149 / NCTC 11857 / SLCC 5334 / V8).